The following is a 338-amino-acid chain: MGLKINRPRRGSMGVYPRKRAADIVPRVRTWPEVNLGKPALLGFAAYKAGMLHAVVVDDRPTSPLYGKEVVKAVTVLDAPPLYVWGFRLYTLDPTNGYKRAVAEVWASELPKFLHRVLTLPEKLDVDKQLKKVEEFRDVAVDVRALVATQPHLSGIGKKTPELLEIPIGGVPSVDERINFAISLLGKTVSPKDVFTPGQLVDVIAVTKGKGYQGVIKRFGVTILPRWHKHRKGHRRTGTIGPQAPAVMFTQPRPGQMGFHQRTEYNKRLLKIGENGAEITPKSGFPHYGVVKGPYILIQGSVPGARKRLVVLRHPVRPPRKAPPAAEPQVVWVSSQTL.

The segment at 230–258 is disordered; it reads HRKGHRRTGTIGPQAPAVMFTQPRPGQMG.

The protein belongs to the universal ribosomal protein uL3 family. In terms of assembly, part of the 50S ribosomal subunit. Forms a cluster with proteins L14 and L24e.

In terms of biological role, one of the primary rRNA binding proteins, it binds directly near the 3'-end of the 23S rRNA, where it nucleates assembly of the 50S subunit. The polypeptide is Large ribosomal subunit protein uL3 (Pyrobaculum aerophilum (strain ATCC 51768 / DSM 7523 / JCM 9630 / CIP 104966 / NBRC 100827 / IM2)).